The chain runs to 201 residues: Large ribosomal subunit protein uL4 (201 aa).

Residues 46–71 (QKTRAEVVGSGKKPWRQKGTGRARAG) are disordered.

Belongs to the universal ribosomal protein uL4 family. Part of the 50S ribosomal subunit.

One of the primary rRNA binding proteins, this protein initially binds near the 5'-end of the 23S rRNA. It is important during the early stages of 50S assembly. It makes multiple contacts with different domains of the 23S rRNA in the assembled 50S subunit and ribosome. Its function is as follows. Forms part of the polypeptide exit tunnel. The chain is Large ribosomal subunit protein uL4 from Shewanella piezotolerans (strain WP3 / JCM 13877).